Consider the following 119-residue polypeptide: Large ribosomal subunit protein bL20 (119 aa).

The protein belongs to the bacterial ribosomal protein bL20 family.

Its function is as follows. Binds directly to 23S ribosomal RNA and is necessary for the in vitro assembly process of the 50S ribosomal subunit. It is not involved in the protein synthesizing functions of that subunit. In Coxiella burnetii (strain CbuK_Q154) (Coxiella burnetii (strain Q154)), this protein is Large ribosomal subunit protein bL20.